A 298-amino-acid chain; its full sequence is UDP-N-acetylenolpyruvoylglucosamine reductase (298 aa).

Residues 27-191 enclose the FAD-binding PCMH-type domain; the sequence is TGGEADVFVM…LDATFSLALE (165 aa). The active site involves R170. The active-site Proton donor is the S220. E290 is an active-site residue.

Belongs to the MurB family. It depends on FAD as a cofactor.

It localises to the cytoplasm. It catalyses the reaction UDP-N-acetyl-alpha-D-muramate + NADP(+) = UDP-N-acetyl-3-O-(1-carboxyvinyl)-alpha-D-glucosamine + NADPH + H(+). It participates in cell wall biogenesis; peptidoglycan biosynthesis. Cell wall formation. This is UDP-N-acetylenolpyruvoylglucosamine reductase from Listeria monocytogenes serotype 4a (strain HCC23).